We begin with the raw amino-acid sequence, 445 residues long: Deoxyribodipyrimidine photo-lyase (445 aa).

In terms of domain architecture, Photolyase/cryptochrome alpha/beta spans 20-148 (SYVVYWMQAS…QVESNVIVPV (129 aa)). Residue Arg-239 coordinates DNA.

This sequence belongs to the DNA photolyase class-2 family. It depends on FAD as a cofactor. Coenzyme F420-(gamma-Glu)n is required as a cofactor.

It catalyses the reaction cyclobutadipyrimidine (in DNA) = 2 pyrimidine residues (in DNA).. Its function is as follows. Involved in repair of UV radiation-induced DNA damage. Catalyzes the light-dependent monomerization (300-600 nm) of cyclobutyl pyrimidine dimers (in cis-syn configuration), which are formed between adjacent bases on the same DNA strand upon exposure to ultraviolet radiation. This chain is Deoxyribodipyrimidine photo-lyase (phr), found in Methanothermobacter thermautotrophicus (strain ATCC 29096 / DSM 1053 / JCM 10044 / NBRC 100330 / Delta H) (Methanobacterium thermoautotrophicum).